A 673-amino-acid polypeptide reads, in one-letter code: Glycine--tRNA ligase beta subunit (673 aa).

The protein belongs to the class-II aminoacyl-tRNA synthetase family. As to quaternary structure, tetramer of two alpha and two beta subunits.

Its subcellular location is the cytoplasm. It carries out the reaction tRNA(Gly) + glycine + ATP = glycyl-tRNA(Gly) + AMP + diphosphate. The protein is Glycine--tRNA ligase beta subunit of Lactococcus lactis subsp. lactis (strain IL1403) (Streptococcus lactis).